The sequence spans 668 residues: DNA ligase (668 aa).

NAD(+)-binding positions include 35 to 39 (DKEYD) and 83 to 84 (SL). Lys125 (N6-AMP-lysine intermediate) is an active-site residue. NAD(+)-binding residues include Arg147, Glu181, and Lys317. Cys410, Cys413, Cys426, and Cys432 together coordinate Zn(2+). Positions 591–668 (KKDNKFNGKT…TEEEFNEMIN (78 aa)) constitute a BRCT domain.

It belongs to the NAD-dependent DNA ligase family. LigA subfamily. Requires Mg(2+) as cofactor. Mn(2+) serves as cofactor.

The catalysed reaction is NAD(+) + (deoxyribonucleotide)n-3'-hydroxyl + 5'-phospho-(deoxyribonucleotide)m = (deoxyribonucleotide)n+m + AMP + beta-nicotinamide D-nucleotide.. In terms of biological role, DNA ligase that catalyzes the formation of phosphodiester linkages between 5'-phosphoryl and 3'-hydroxyl groups in double-stranded DNA using NAD as a coenzyme and as the energy source for the reaction. It is essential for DNA replication and repair of damaged DNA. The protein is DNA ligase of Clostridium tetani (strain Massachusetts / E88).